Reading from the N-terminus, the 88-residue chain is Cytochrome c oxidase subunit 6B2 (88 aa).

The segment at 1–22 is disordered; sequence MLDVEAQEPPKGKWSTPPFDPR. Positions 29–75 constitute a CHCH domain; it reads IRNCYQNFLDYHRCLKTRTRRGKSTQPCEYYFRVYHSLCPISWVESW. Positions 32 to 42 match the Cx9C motif motif; the sequence is CYQNFLDYHRC. Intrachain disulfides connect Cys32-Cys67 and Cys42-Cys56. The Cx10C motif signature appears at 56-67; the sequence is CEYYFRVYHSLC.

The protein belongs to the cytochrome c oxidase subunit 6B family. Component of the cytochrome c oxidase (complex IV, CIV), a multisubunit enzyme composed of 14 subunits. The complex is composed of a catalytic core of 3 subunits MT-CO1, MT-CO2 and MT-CO3, encoded in the mitochondrial DNA, and 11 supernumerary subunits COX4I1 (or COX4I2), COX5A, COX5B, COX6A1 (or COX6A2), COX6B1 (or COX6B2), COX6C, COX7A2 (or COX7A1), COX7B, COX7C, COX8A and NDUFA4, which are encoded in the nuclear genome. The complex exists as a monomer or a dimer and forms supercomplexes (SCs) in the inner mitochondrial membrane with NADH-ubiquinone oxidoreductase (complex I, CI) and ubiquinol-cytochrome c oxidoreductase (cytochrome b-c1 complex, complex III, CIII), resulting in different assemblies (supercomplex SCI(1)III(2)IV(1) and megacomplex MCI(2)III(2)IV(2)). As to expression, testis specific. Weak expression in thymus and heart. Expressed in cancer cell lines.

It is found in the mitochondrion inner membrane. It participates in energy metabolism; oxidative phosphorylation. Its function is as follows. Component of the cytochrome c oxidase, the last enzyme in the mitochondrial electron transport chain which drives oxidative phosphorylation. The respiratory chain contains 3 multisubunit complexes succinate dehydrogenase (complex II, CII), ubiquinol-cytochrome c oxidoreductase (cytochrome b-c1 complex, complex III, CIII) and cytochrome c oxidase (complex IV, CIV), that cooperate to transfer electrons derived from NADH and succinate to molecular oxygen, creating an electrochemical gradient over the inner membrane that drives transmembrane transport and the ATP synthase. Cytochrome c oxidase is the component of the respiratory chain that catalyzes the reduction of oxygen to water. Electrons originating from reduced cytochrome c in the intermembrane space (IMS) are transferred via the dinuclear copper A center (CU(A)) of subunit 2 and heme A of subunit 1 to the active site in subunit 1, a binuclear center (BNC) formed by heme A3 and copper B (CU(B)). The BNC reduces molecular oxygen to 2 water molecules using 4 electrons from cytochrome c in the IMS and 4 protons from the mitochondrial matrix. The protein is Cytochrome c oxidase subunit 6B2 (COX6B2) of Homo sapiens (Human).